A 204-amino-acid chain; its full sequence is dITP/XTP pyrophosphatase (204 aa).

A substrate-binding site is contributed by Ser-8–Lys-13. The active-site Proton acceptor is the Asp-73. Asp-73 provides a ligand contact to Mg(2+). Residues Ser-74, Phe-155–Asp-158, Lys-179, and His-184–Arg-185 contribute to the substrate site.

This sequence belongs to the HAM1 NTPase family. As to quaternary structure, homodimer. It depends on Mg(2+) as a cofactor.

The enzyme catalyses XTP + H2O = XMP + diphosphate + H(+). The catalysed reaction is dITP + H2O = dIMP + diphosphate + H(+). It carries out the reaction ITP + H2O = IMP + diphosphate + H(+). Pyrophosphatase that catalyzes the hydrolysis of nucleoside triphosphates to their monophosphate derivatives, with a high preference for the non-canonical purine nucleotides XTP (xanthosine triphosphate), dITP (deoxyinosine triphosphate) and ITP. Seems to function as a house-cleaning enzyme that removes non-canonical purine nucleotides from the nucleotide pool, thus preventing their incorporation into DNA/RNA and avoiding chromosomal lesions. The sequence is that of dITP/XTP pyrophosphatase from Mycolicibacterium paratuberculosis (strain ATCC BAA-968 / K-10) (Mycobacterium paratuberculosis).